We begin with the raw amino-acid sequence, 251 residues long: CDP-diacylglycerol pyrophosphatase (251 aa).

A helical membrane pass occupies residues alanine 4–tryptophan 24.

The protein belongs to the Cdh family.

The protein resides in the cell inner membrane. It carries out the reaction a CDP-1,2-diacyl-sn-glycerol + H2O = a 1,2-diacyl-sn-glycero-3-phosphate + CMP + 2 H(+). Its pathway is phospholipid metabolism; CDP-diacylglycerol degradation; phosphatidate from CDP-diacylglycerol: step 1/1. The protein is CDP-diacylglycerol pyrophosphatase of Escherichia coli O81 (strain ED1a).